Reading from the N-terminus, the 172-residue chain is 3-hydroxydecanoyl-[acyl-carrier-protein] dehydratase (172 aa).

His-71 is an active-site residue.

This sequence belongs to the thioester dehydratase family. FabA subfamily. In terms of assembly, homodimer.

The protein localises to the cytoplasm. The catalysed reaction is a (3R)-hydroxyacyl-[ACP] = a (2E)-enoyl-[ACP] + H2O. The enzyme catalyses (3R)-hydroxydecanoyl-[ACP] = (2E)-decenoyl-[ACP] + H2O. It carries out the reaction (2E)-decenoyl-[ACP] = (3Z)-decenoyl-[ACP]. It functions in the pathway lipid metabolism; fatty acid biosynthesis. In terms of biological role, necessary for the introduction of cis unsaturation into fatty acids. Catalyzes the dehydration of (3R)-3-hydroxydecanoyl-ACP to E-(2)-decenoyl-ACP and then its isomerization to Z-(3)-decenoyl-ACP. Can catalyze the dehydratase reaction for beta-hydroxyacyl-ACPs with saturated chain lengths up to 16:0, being most active on intermediate chain length. The chain is 3-hydroxydecanoyl-[acyl-carrier-protein] dehydratase from Aliivibrio fischeri (strain ATCC 700601 / ES114) (Vibrio fischeri).